Consider the following 213-residue polypeptide: Probable transaldolase (213 aa).

Catalysis depends on Lys-83, which acts as the Schiff-base intermediate with substrate.

Belongs to the transaldolase family. Type 3B subfamily.

The protein localises to the cytoplasm. The enzyme catalyses D-sedoheptulose 7-phosphate + D-glyceraldehyde 3-phosphate = D-erythrose 4-phosphate + beta-D-fructose 6-phosphate. It participates in carbohydrate degradation; pentose phosphate pathway; D-glyceraldehyde 3-phosphate and beta-D-fructose 6-phosphate from D-ribose 5-phosphate and D-xylulose 5-phosphate (non-oxidative stage): step 2/3. In terms of biological role, transaldolase is important for the balance of metabolites in the pentose-phosphate pathway. This Geobacillus thermodenitrificans (strain NG80-2) protein is Probable transaldolase.